A 70-amino-acid chain; its full sequence is PPF2L antigen (70 aa).

In Plasmodium falciparum (isolate Palo Alto / Uganda), this protein is PPF2L antigen.